The following is a 554-amino-acid chain: Zinc finger protein syd-9 (554 aa).

C2H2-type zinc fingers lie at residues 20-43 (LTCPQCPKSFSSTKLLQQHQQMFH), 65-87 (FICETCGKAFRFRSNLAEHRSVH), and 93-116 (YVCKFCGKSSRLKGNLTKHILKHH). Disordered regions lie at residues 136–158 (KIVTKDNGPTTNGSTPTTSTATP), 298–319 (SPDTVQSDHSDDFEQDSPPPMA), and 342–383 (ASGQ…CPSP). Low complexity predominate over residues 142-158 (NGPTTNGSTPTTSTATP). 2 stretches are compositionally biased toward polar residues: residues 351-360 (PDSTDTQKGC) and 370-379 (SDPSTSSGDS). A C2H2-type 4 zinc finger spans residues 387-410 (LHCKECGTLVRKSSHLPIHMTMSH). Residues 516-554 (RMEMSLSPIKPFQQRFSRERSSSSSVERSPSRERSRSPL) form a disordered region. Residues 544 to 554 (SPSRERSRSPL) show a composition bias toward basic and acidic residues.

Expressed mainly in body wall muscles and ventral cord motoneurons.

The protein localises to the nucleus. It is found in the nucleus speckle. In terms of biological role, plays a role in regulating synaptic function, probably by modulation of endocytosis. May be dispensable in muscle for normal locomotion. May be involved in post-transcriptional mRNA processing, in parallel with unc-75. This Caenorhabditis elegans protein is Zinc finger protein syd-9.